A 939-amino-acid chain; its full sequence is Valine--tRNA ligase (939 aa).

The 'HIGH' region signature appears at 47-57 (PNVTGILHMGH). Residues 563–567 (KLSKS) carry the 'KMSKS' region motif. K566 lines the ATP pocket. Positions 874-939 (EHLAKERVRL…QSILDKLASL (66 aa)) form a coiled coil.

Belongs to the class-I aminoacyl-tRNA synthetase family. ValS type 1 subfamily. As to quaternary structure, monomer.

It localises to the cytoplasm. It carries out the reaction tRNA(Val) + L-valine + ATP = L-valyl-tRNA(Val) + AMP + diphosphate. Functionally, catalyzes the attachment of valine to tRNA(Val). As ValRS can inadvertently accommodate and process structurally similar amino acids such as threonine, to avoid such errors, it has a 'posttransfer' editing activity that hydrolyzes mischarged Thr-tRNA(Val) in a tRNA-dependent manner. The sequence is that of Valine--tRNA ligase from Chlamydia trachomatis serovar L2 (strain ATCC VR-902B / DSM 19102 / 434/Bu).